The primary structure comprises 409 residues: Glutamyl-tRNA(Gln) amidotransferase subunit D (409 aa).

The Asparaginase/glutaminase domain maps to 68–390; that stretch reads RKISVLATGG…DLFRDLFRKN (323 aa). Residues threonine 78, threonine 152, aspartate 153, and lysine 230 contribute to the active site.

It belongs to the asparaginase 1 family. GatD subfamily. Heterodimer of GatD and GatE.

It catalyses the reaction L-glutamyl-tRNA(Gln) + L-glutamine + ATP + H2O = L-glutaminyl-tRNA(Gln) + L-glutamate + ADP + phosphate + H(+). In terms of biological role, allows the formation of correctly charged Gln-tRNA(Gln) through the transamidation of misacylated Glu-tRNA(Gln) in organisms which lack glutaminyl-tRNA synthetase. The reaction takes place in the presence of glutamine and ATP through an activated gamma-phospho-Glu-tRNA(Gln). The GatDE system is specific for glutamate and does not act on aspartate. The sequence is that of Glutamyl-tRNA(Gln) amidotransferase subunit D from Thermoplasma acidophilum (strain ATCC 25905 / DSM 1728 / JCM 9062 / NBRC 15155 / AMRC-C165).